A 320-amino-acid chain; its full sequence is 4-hydroxythreonine-4-phosphate dehydrogenase (320 aa).

A substrate-binding site is contributed by Thr-132. A divalent metal cation contacts are provided by His-161, His-205, and His-258. Substrate is bound by residues Lys-266, Asn-275, and Arg-284.

It belongs to the PdxA family. In terms of assembly, homodimer. A divalent metal cation serves as cofactor.

Its subcellular location is the cytoplasm. The catalysed reaction is 4-(phosphooxy)-L-threonine + NAD(+) = 3-amino-2-oxopropyl phosphate + CO2 + NADH. It functions in the pathway cofactor biosynthesis; pyridoxine 5'-phosphate biosynthesis; pyridoxine 5'-phosphate from D-erythrose 4-phosphate: step 4/5. Catalyzes the NAD(P)-dependent oxidation of 4-(phosphooxy)-L-threonine (HTP) into 2-amino-3-oxo-4-(phosphooxy)butyric acid which spontaneously decarboxylates to form 3-amino-2-oxopropyl phosphate (AHAP). The polypeptide is 4-hydroxythreonine-4-phosphate dehydrogenase (Aquifex aeolicus (strain VF5)).